Here is a 119-residue protein sequence, read N- to C-terminus: Large ribosomal subunit protein bL20 (119 aa).

It belongs to the bacterial ribosomal protein bL20 family.

Binds directly to 23S ribosomal RNA and is necessary for the in vitro assembly process of the 50S ribosomal subunit. It is not involved in the protein synthesizing functions of that subunit. This chain is Large ribosomal subunit protein bL20, found in Teredinibacter turnerae (strain ATCC 39867 / T7901).